The following is a 274-amino-acid chain: Tyrosinase (274 aa).

The Cu cation site is built by H38, H54, H63, H190, H194, and H216.

Belongs to the tyrosinase family. The cofactor is Cu(2+).

The enzyme catalyses 2 L-dopa + O2 = 2 L-dopaquinone + 2 H2O. It catalyses the reaction L-tyrosine + O2 = L-dopaquinone + H2O. This is a copper-containing oxidase that functions in the formation of pigments such as melanins and other polyphenolic compounds. The protein is Tyrosinase (melC2) of Streptomyces glaucescens.